Here is a 186-residue protein sequence, read N- to C-terminus: Photosystem I assembly protein Ycf4 (186 aa).

2 helical membrane passes run Trp-26 to Phe-46 and Ile-66 to Ile-86.

It belongs to the Ycf4 family.

The protein localises to the plastid. It is found in the chloroplast thylakoid membrane. Functionally, seems to be required for the assembly of the photosystem I complex. The protein is Photosystem I assembly protein Ycf4 of Pyropia yezoensis (Susabi-nori).